We begin with the raw amino-acid sequence, 205 residues long: Small ribosomal subunit protein uS4 (205 aa).

A compositionally biased stretch (basic and acidic residues) spans 1–16 (MSKRESSKYKIDRRMG). The segment at 1 to 46 (MSKRESSKYKIDRRMGENIWGRPKSPVNRREYGPGQHGQRRKGKLS) is disordered. An S4 RNA-binding domain is found at 94–157 (SRLDAIVYRA…KQLVTVLEAV (64 aa)).

Belongs to the universal ribosomal protein uS4 family. In terms of assembly, part of the 30S ribosomal subunit. Contacts protein S5. The interaction surface between S4 and S5 is involved in control of translational fidelity.

Functionally, one of the primary rRNA binding proteins, it binds directly to 16S rRNA where it nucleates assembly of the body of the 30S subunit. With S5 and S12 plays an important role in translational accuracy. This Rhizobium etli (strain ATCC 51251 / DSM 11541 / JCM 21823 / NBRC 15573 / CFN 42) protein is Small ribosomal subunit protein uS4.